The sequence spans 413 residues: Histidine--tRNA ligase (413 aa).

Belongs to the class-II aminoacyl-tRNA synthetase family. In terms of assembly, homodimer.

Its subcellular location is the cytoplasm. It carries out the reaction tRNA(His) + L-histidine + ATP = L-histidyl-tRNA(His) + AMP + diphosphate + H(+). The chain is Histidine--tRNA ligase from Wolbachia sp. subsp. Brugia malayi (strain TRS).